Here is a 205-residue protein sequence, read N- to C-terminus: Protein N-terminal glutamine amidohydrolase (205 aa).

Active-site residues include cysteine 20, histidine 74, and aspartate 90.

This sequence belongs to the NTAQ1 family. In terms of assembly, monomer.

It carries out the reaction N-terminal L-glutaminyl-[protein] + H2O = N-terminal L-glutamyl-[protein] + NH4(+). Mediates the side-chain deamidation of N-terminal glutamine residues to glutamate, an important step in N-end rule pathway of protein degradation. Conversion of the resulting N-terminal glutamine to glutamate renders the protein susceptible to arginylation, polyubiquitination and degradation as specified by the N-end rule. Does not act on substrates with internal or C-terminal glutamine and does not act on non-glutamine residues in any position. In Drosophila ananassae (Fruit fly), this protein is Protein N-terminal glutamine amidohydrolase (tun).